A 653-amino-acid polypeptide reads, in one-letter code: Biotin biosynthesis bifunctional protein BioWF (653 aa).

A substrate-binding site is contributed by R278. A pyridoxal 5'-phosphate-binding site is contributed by 365 to 366 (GY). H390 provides a ligand contact to substrate. Residues S436, 461–464 (DDAH), and 492–495 (TASK) each bind pyridoxal 5'-phosphate. K495 bears the N6-(pyridoxal phosphate)lysine mark.

The protein in the N-terminal section; belongs to the BioW family. This sequence in the C-terminal section; belongs to the class-II pyridoxal-phosphate-dependent aminotransferase family. BioF subfamily. In terms of assembly, homodimer. Requires Mg(2+) as cofactor. Pyridoxal 5'-phosphate is required as a cofactor.

The enzyme catalyses heptanedioate + ATP + CoA = 6-carboxyhexanoyl-CoA + AMP + diphosphate. It carries out the reaction 6-carboxyhexanoyl-[ACP] + L-alanine + H(+) = (8S)-8-amino-7-oxononanoate + holo-[ACP] + CO2. It participates in metabolic intermediate metabolism; pimeloyl-CoA biosynthesis; pimeloyl-CoA from pimelate: step 1/1. It functions in the pathway cofactor biosynthesis; biotin biosynthesis. Its function is as follows. Catalyzes both the decarboxylative condensation of pimeloyl-[acyl-carrier protein] and L-alanine to produce 8-amino-7-oxononanoate (AON), [acyl-carrier protein], and carbon dioxide, and the transformation of pimelate into pimeloyl-CoA with concomitant hydrolysis of ATP to AMP. In Cutibacterium acnes (strain DSM 16379 / KPA171202) (Propionibacterium acnes), this protein is Biotin biosynthesis bifunctional protein BioWF.